A 160-amino-acid chain; its full sequence is 2-amino-4-hydroxy-6-hydroxymethyldihydropteridine pyrophosphokinase (160 aa).

Belongs to the HPPK family.

It carries out the reaction 6-hydroxymethyl-7,8-dihydropterin + ATP = (7,8-dihydropterin-6-yl)methyl diphosphate + AMP + H(+). It functions in the pathway cofactor biosynthesis; tetrahydrofolate biosynthesis; 2-amino-4-hydroxy-6-hydroxymethyl-7,8-dihydropteridine diphosphate from 7,8-dihydroneopterin triphosphate: step 4/4. Its function is as follows. Catalyzes the transfer of pyrophosphate from adenosine triphosphate (ATP) to 6-hydroxymethyl-7,8-dihydropterin, an enzymatic step in folate biosynthesis pathway. The sequence is that of 2-amino-4-hydroxy-6-hydroxymethyldihydropteridine pyrophosphokinase (folK) from Aquifex aeolicus (strain VF5).